The sequence spans 74 residues: Serine rich endogenous peptide 23 (74 aa).

The N-terminal stretch at 1 to 25 (MNKVVVYVLALSILLFFGLPNTTLA) is a signal peptide. Positions 52–66 (KIAVGGSDSVRAHSK) match the SCOOP motif motif. Residues 58 to 60 (SDS) carry the SxS motif essential for MIK2 binding motif.

This sequence belongs to the serine rich endogenous peptide (SCOOP) phytocytokine family. Interacts with MIK2 (via extracellular leucine-rich repeat domain); this interaction triggers the formation of complex between MIK2 and the BAK1/SERK3 and SERK4 coreceptors, and subsequent BAK1 activation by phosphorylation. As to expression, mostly expressed in roots, and, to a lower extent, in seedlings shoots.

Its subcellular location is the cell membrane. It localises to the secreted. It is found in the extracellular space. The protein resides in the apoplast. Functionally, brassicaceae-specific phytocytokine (plant endogenous peptide released into the apoplast) perceived by MIK2 in a BAK1/SERK3 and SERK4 coreceptors-dependent manner, that modulates various physiological and antimicrobial processes including growth prevention and reactive oxygen species (ROS) response regulation. Inhibits root growth. The protein is Serine rich endogenous peptide 23 of Arabidopsis thaliana (Mouse-ear cress).